A 198-amino-acid polypeptide reads, in one-letter code: Type II secretion system protein J (198 aa).

A propeptide spans 1–7 (MIRRSSG) (leader sequence). Position 8 is an N-methylphenylalanine (Phe-8). A helical membrane pass occupies residues 8–28 (FTLVEMLLALAILAALSVAAV).

It belongs to the GSP J family. As to quaternary structure, type II secretion is composed of four main components: the outer membrane complex, the inner membrane complex, the cytoplasmic secretion ATPase and the periplasm-spanning pseudopilus. Interacts with core component PulG. Cleaved by prepilin peptidase. In terms of processing, methylated by prepilin peptidase at the amino group of the N-terminal phenylalanine once the leader sequence is cleaved by prepilin peptidase.

It localises to the cell inner membrane. Its function is as follows. Component of the type II secretion system required for the energy-dependent secretion of extracellular factors such as proteases and toxins from the periplasm. Part of the pseudopilus tip complex that is critical for the recognition and binding of secretion substrates. This Klebsiella pneumoniae protein is Type II secretion system protein J (pulJ).